Consider the following 100-residue polypeptide: Small ribosomal subunit protein uS14c (100 aa).

The segment at 1–31 (MARKSLIQREKKRQKLEQKYHSIRRSSKKEI) is disordered.

It belongs to the universal ribosomal protein uS14 family. Part of the 30S ribosomal subunit.

It is found in the plastid. Its subcellular location is the chloroplast. Binds 16S rRNA, required for the assembly of 30S particles. The protein is Small ribosomal subunit protein uS14c of Solanum bulbocastanum (Wild potato).